We begin with the raw amino-acid sequence, 373 residues long: Arfaptin-1 (373 aa).

Residues 1 to 47 are disordered; sequence MAQESPKNSAAEIPVTSNGEVDDAHEHGYNRDLKHSLPSGLGLSETQ. An N-acetylalanine modification is found at alanine 2. Serine 5 is subject to Phosphoserine. Residues 22 to 35 show a composition bias toward basic and acidic residues; that stretch reads DDAHEHGYNRDLKH. Residues serine 36, serine 39, serine 69, serine 79, and serine 132 each carry the phosphoserine modification. One can recognise an AH domain in the interval 153–353; sequence TVDLELEAQI…NQKQLELTLK (201 aa). Threonine 361 is subject to Phosphothreonine.

Forms homodimers or heterodimers with ARFIP2. Interacts with non-myristoylated GTP-bound ARF3, but not to GDP-bound ARF3. Interacts with ARF1. Binds with lower affinity to ARF5 and with very little affinity to ARF6. Interacts with ARL1. Interacts with ATG9A. Post-translationally, phosphorylated by PRKD1; phosphorylation delocalizes ARFIP1 from the Golgi and disrupts its ability to inhibit the activity of ADP-ribosylation factor, an important component of the vesicle scission machinery.

The protein resides in the golgi apparatus. It localises to the trans-Golgi network membrane. In terms of biological role, plays a role in controlling biogenesis of secretory granules at the trans-Golgi network. Mechanistically, binds ARF-GTP at the neck of a growing secretory granule precursor and forms a protective scaffold. Once the granule precursor has been completely loaded, active PRKD1 phosphorylates ARFIP1 and releases it from ARFs. In turn, ARFs induce fission. Through this mechanism, ensures proper secretory granule formation at the Golgi of pancreatic beta cells. The sequence is that of Arfaptin-1 from Mus musculus (Mouse).